The chain runs to 104 residues: AVIToxin-VAR1 (104 aa).

The first 19 residues, 1-19 (MRSLLCAPLLLLLLSAGES), serve as a signal peptide directing secretion. Disulfide bonds link C26-C38, C32-C50, C37-C78, C60-C86, and C80-C96.

The protein belongs to the AVIT (prokineticin) family. In terms of tissue distribution, expressed by the venom gland.

It is found in the secreted. Functionally, potent agonist for both PKR1/PROKR1 and PKR2/PROKR2. Potently contracts gastrointestinal (GI) smooth muscle. This chain is AVIToxin-VAR1, found in Varanus varius (Lace monitor lizard).